The sequence spans 165 residues: NADH-quinone oxidoreductase subunit I (165 aa).

2 consecutive 4Fe-4S ferredoxin-type domains span residues 66–98 (HRLTKNEKGDLKCVACDMCATACPANCIFITAT) and 109–138 (SKFTIDLLECVFCGLCVEACPKDAIRMDTG). Residues C78, C81, C84, C88, C118, C121, C124, and C128 each coordinate [4Fe-4S] cluster.

It belongs to the complex I 23 kDa subunit family. NDH-1 is composed of 14 different subunits. Subunits NuoA, H, J, K, L, M, N constitute the membrane sector of the complex. [4Fe-4S] cluster is required as a cofactor.

The protein resides in the cell inner membrane. The catalysed reaction is a quinone + NADH + 5 H(+)(in) = a quinol + NAD(+) + 4 H(+)(out). In terms of biological role, NDH-1 shuttles electrons from NADH, via FMN and iron-sulfur (Fe-S) centers, to quinones in the respiratory chain. The immediate electron acceptor for the enzyme in this species is believed to be ubiquinone. Couples the redox reaction to proton translocation (for every two electrons transferred, four hydrogen ions are translocated across the cytoplasmic membrane), and thus conserves the redox energy in a proton gradient. The protein is NADH-quinone oxidoreductase subunit I of Campylobacter fetus subsp. fetus (strain 82-40).